Here is a 358-residue protein sequence, read N- to C-terminus: MKFSTIALPLLASAALAQTNSSHSGTNATSHNSTVPNENSKTTIVVTNDDSWASANIRAFYDELKKEGYNVFMFAPALQQSGTGGTFVLPKNTTLAKGAEWGSAPVGAPAWGQDEKDDHIWYFDGTPGAAVTFGFDYALPKFHNNITVDLVVSGPNEGWNLGPFVYTLSGTEGAMYTSVLRGVPAIAFSGENKHTYYANASNSETASHNIYAKASTAIVKNLLKNAKGRPSVLPYGVGLSVNLPLVGDIDPTGKCTDPKPIFTRQTGRGAITDKLVFNETTGLFKYGDIKSDATKACLNGDCFLPDETDVINNWGCYSSISVVSTDYDAPGALAAEAQFLNRGLVEFAPTGYGSFPGN.

A signal peptide spans Met-1–Ala-17. Asn-20, Asn-27, and Asn-32 each carry an N-linked (GlcNAc...) asparagine glycan. Residues Ser-21–Lys-41 form a disordered region. Mg(2+)-binding residues include Asp-49, Asp-50, and Ser-81. Residues Asn-92 and Asn-145 are each glycosylated (N-linked (GlcNAc...) asparagine). Asn-156 lines the Mg(2+) pocket. Ser-189 is an active-site residue. 2 N-linked (GlcNAc...) asparagine glycosylation sites follow: Asn-199 and Asn-278.

The protein belongs to the SurE nucleotidase family. The cofactor is Mg(2+).

The protein localises to the secreted. The enzyme catalyses a phosphate monoester + H2O = an alcohol + phosphate. Functionally, probably serves to scavenge phosphorus for growing cells. In Yarrowia lipolytica (strain CLIB 122 / E 150) (Yeast), this protein is Acid phosphatase (PHO2).